Reading from the N-terminus, the 520-residue chain is Vacuolar protein sorting-associated protein 9A (520 aa).

The 145-residue stretch at 102-246 (VIADEKLFQK…ISNIDAKSIS (145 aa)) folds into the VPS9 domain. GTP is bound by residues Asn-180 and Asp-185. 3 disordered regions span residues 267–331 (DSQT…AESI), 396–433 (LAPS…ETDR), and 464–520 (LVEG…EASE). Over residues 287 to 323 (LQKTQSLNPKRENTLFQSKSSDSLSGTNELLNINSET) the composition is skewed to polar residues. A Phosphoserine modification is found at Ser-330. Residues 396 to 407 (LAPSSSPLQASS) show a composition bias toward low complexity. Composition is skewed to basic and acidic residues over residues 413–433 (KESE…ETDR) and 464–497 (LVEG…REGD).

Homodimer. The homodimer interacts with RABF2B. Interacts with RABF1 and RABF2A. As to expression, widely expressed.

Its function is as follows. Functions as a guanine nucleotide exchange factor (GEF) for Rab small GTPases. Activates specifically RABF1, RABF2A and RABF2B proteins. Required for early stages of embryogenesis, cytokinesis, embryogenesis, and organ development. Is essential for the establishment or maintenance of the polar localization of the auxin efflux carrier PIN1. This Arabidopsis thaliana (Mouse-ear cress) protein is Vacuolar protein sorting-associated protein 9A.